We begin with the raw amino-acid sequence, 908 residues long: MKIIFPILSNPVFRRTVKLLLCLLWIGYSQGTTHVLRFGGIFEYVESGPMGAEELAFRFAVNTINRNRTLLPNTTLTYDTQKINLYDSFEASKKACDQLSLGVAAIFGPSHSSSANAVQSICNALGVPHIQTRWKHQVSDNKDSFYVSLYPDFSSLSRAILDLVQFFKWKTVTVVYDDSTGLIRLQELIKAPSRYNLRLKIRQLPADTKDAKPLLKEMKRGKEFHVIFDCSHEMAAGILKQALAMGMMTEYYHYIFTTLDLFALDVEPYRYSGVNMTGFRILNTENTQVSSIIEKWSMERLQAPPKPDSGLLDGFMTTDAALMYDAVHVVSVAVQQFPQMTVSSLQCNRHKPWRFGTRFMSLIKEAHWEGLTGRITFNKTNGLRTDFDLDVISLKEEGLEKIGTWDPASGLNMTESQKGKPANITDSLSNRSLIVTTILEEPYVLFKKSDKPLYGNDRFEGYCIDLLRELSTILGFTYEIRLVEDGKYGAQDDANGQWNGMVRELIDHKADLAVAPLAITYVREKVIDFSKPFMTLGISILYRKPNGTNPGVFSFLNPLSPDIWMYILLAYLGVSCVLFVIARFSPYEWYNPHPCNPDSDVVENNFTLLNSFWFGVGALMQQGSELMPKALSTRIVGGIWWFFTLIIISSYTANLAAFLTVERMESPIDSADDLAKQTKIEYGAVEDGATMTFFKKSKISTYDKMWAFMSSRRQSVLVKSNEEGIQRVLTSDYAFLMESTTIEFVTQRNCNLTQIGGLIDSKGYGVGTPMGSPYRDKITIAILQLQEEGKLHMMKEKWWRGNGCPEEESKEASALGVQNIGGIFIVLAAGLVLSVFVAVGEFLYKSKKNAQLEKRSFCSAMVEELRMSLKCQRRLKHKPQAPVIVKTEEVINMHTFNDRRLPGKETMA.

The signal sequence occupies residues 1-31 (MKIIFPILSNPVFRRTVKLLLCLLWIGYSQG). The Extracellular segment spans residues 32-561 (TTHVLRFGGI…VFSFLNPLSP (530 aa)). N-linked (GlcNAc...) asparagine glycans are attached at residues N67, N73, N275, N378, N412, N423, and N430. C96 and C347 are oxidised to a cystine. Residues P516, A518, and R523 each contribute to the L-glutamate site. Residue N546 is glycosylated (N-linked (GlcNAc...) asparagine). Residues 562–582 (DIWMYILLAYLGVSCVLFVIA) traverse the membrane as a helical segment. Residues 583–635 (RFSPYEWYNPHPCNPDSDVVENNFTLLNSFWFGVGALMQQGSELMPKALSTRI) lie on the Cytoplasmic side of the membrane. The helical transmembrane segment at 636 to 656 (VGGIWWFFTLIIISSYTANLA) threads the bilayer. At 657–819 (AFLTVERMES…KEASALGVQN (163 aa)) the chain is on the extracellular side. The L-glutamate site is built by A689, T690, and E738. C750 and C804 are oxidised to a cystine. Residue N751 is glycosylated (N-linked (GlcNAc...) asparagine). The helical transmembrane segment at 820 to 840 (IGGIFIVLAAGLVLSVFVAVG) threads the bilayer. Topologically, residues 841–908 (EFLYKSKKNA…RRLPGKETMA (68 aa)) are cytoplasmic. Phosphoserine; by PKC occurs at positions 846 and 868. K886 participates in a covalent cross-link: Glycyl lysine isopeptide (Lys-Gly) (interchain with G-Cter in SUMO1).

Belongs to the glutamate-gated ion channel (TC 1.A.10.1) family. GRIK2 subfamily. In terms of assembly, homotetramer and heterotetramer with GRIK5. Tetramers may be formed by the dimerization of dimers. Assembles into a kainate-gated homomeric channel that does not bind AMPA. Can form functional heteromeric receptors with GRIK5. Can form functional heteromeric receptors with GRIK3 and GRIK4. Interacts with DLG4. Interacts with NETO2. Interacts (via C-terminus) with KLHL17 (via kelch repeats); the interaction targets GRIK2 for degradation via ubiquitin-proteasome pathway. Sumoylation mediates kainate receptor-mediated endocytosis and regulates synaptic transmission. Sumoylation is enhanced by PIAS3 and desumoylated by SENP1. In terms of processing, ubiquitinated. Ubiquitination regulates the GRIK2 levels at the synapse by leading kainate receptor degradation through proteasome. Post-translationally, phosphorylated by PKC at Ser-868 upon agonist activation, this directly enhance sumoylation. In terms of tissue distribution, expression is higher in cerebellum than in cerebral cortex.

The protein resides in the cell membrane. Its subcellular location is the postsynaptic cell membrane. It carries out the reaction Ca(2+)(in) = Ca(2+)(out). It catalyses the reaction Na(+)(in) = Na(+)(out). Cold receptor activity activated by temperatures between 10-19 degrees Celsius. Functionally, ionotropic glutamate receptor that functions as a cation permeable ligand-gated ion channel, gated by L-glutamate and the glutamatergic agonist kainic acid. L-glutamate acts as an excitatory neurotransmitter at many synapses in the central nervous system. Binding of the excitatory neurotransmitter L-glutamate induces a conformation change, leading to the opening of the cation channel, and thereby converts the chemical signal to an electrical impulse. The receptor then desensitizes rapidly and enters a transient inactive state, characterized by the presence of bound agonist. Modulates cell surface expression of NETO2. In association with GRIK3, involved in presynaptic facilitation of glutamate release at hippocampal mossy fiber synapses. Independent of its ionotropic glutamate receptor activity, acts as a thermoreceptor conferring sensitivity to cold temperatures. Functions in dorsal root ganglion neurons. The protein is Glutamate receptor ionotropic, kainate 2 (GRIK2) of Homo sapiens (Human).